The primary structure comprises 316 residues: Serpentine receptor class delta-45 (316 aa).

The next 7 helical transmembrane spans lie at 8-28 (VFYP…IFII), 42-62 (ILLV…LIQI), 91-111 (YFLT…TIYL), 128-148 (VTFF…SLIL), 184-204 (IIIT…GLLL), 234-254 (LQVF…LVLA), and 266-286 (FFSV…LYSV).

The protein belongs to the nematode receptor-like protein srd family.

The protein resides in the membrane. The protein is Serpentine receptor class delta-45 (srd-45) of Caenorhabditis elegans.